Here is a 472-residue protein sequence, read N- to C-terminus: Uronate isomerase (472 aa).

Belongs to the metallo-dependent hydrolases superfamily. Uronate isomerase family.

It carries out the reaction D-glucuronate = D-fructuronate. The enzyme catalyses aldehydo-D-galacturonate = keto-D-tagaturonate. Its pathway is carbohydrate metabolism; pentose and glucuronate interconversion. This Xanthomonas oryzae pv. oryzae (strain MAFF 311018) protein is Uronate isomerase.